The sequence spans 514 residues: Zinc finger CCCH-type with G patch domain-containing protein (514 aa).

A disordered region spans residues 96-129 (GEEPQPPGAGDGASTGSKDSEEEEEEEDGSSGMK). The span at 115–124 (SEEEEEEEDG) shows a compositional bias: acidic residues. The segment at 171–197 (KAMKPCPFFLDGKCRFDDSCRFSHGQV) adopts a C3H1-type zinc-finger fold. Disordered stretches follow at residues 262–288 (IPPLRGSDSSSSDDDDDDEEEDDAAED), 363–422 (QQRK…AAER), and 494–514 (EEHSLQREQRKADTHKKMTEF). Residues 272 to 287 (SSDDDDDDEEEDDAAE) show a composition bias toward acidic residues. The region spanning 315–373 (TRGIGSKLLARMGYEIGKGLGRNAEGRVEPIQAVLLPKGKSLDQCIEMQQRKKAGGKRE) is the G-patch domain. Residues 365-383 (RKKAGGKREHKAGKRRPRA) are compositionally biased toward basic residues.

It is found in the nucleus. Transcription repressor that specifically binds the 5'-GGAG[GA]A[GA]A-3' consensus sequence. Represses transcription by recruiting the chromatin multiprotein complex NuRD to target promoters. Negatively regulates expression of EGFR, a gene involved in cell proliferation, survival and migration. The chain is Zinc finger CCCH-type with G patch domain-containing protein (zgpat) from Xenopus tropicalis (Western clawed frog).